Consider the following 1151-residue polypeptide: Ankyrin and IPT/TIG repeat-containing protein C26H5.05 (1151 aa).

Disordered regions lie at residues 77–104 (NLPS…AECL), 452–511 (KSRN…ENSR), and 516–535 (QLSA…KSVE). The segment covering 87-98 (SHASSPNLSNSQ) has biased composition (polar residues). Residues 452–463 (KSRNLTKSEKTG) are compositionally biased toward basic and acidic residues. 2 stretches are compositionally biased toward polar residues: residues 464-496 (KSNS…SDNP) and 517-532 (LSAS…STLK). Residues 658–739 (PLISRIIPNK…SSEAPVMFTY (82 aa)) form the IPT/TIG domain. 2 ANK repeats span residues 861–890 (SGRS…DVNK) and 894–923 (LGYT…KPDV). Positions 1041-1067 (PPPYSEFADDTTAQAGSSKRDSAISED) are disordered. A compositionally biased stretch (basic and acidic residues) spans 1058–1067 (SKRDSAISED). Residues 1113–1133 (MDFMLFSFWLPALLLLSIFGL) form a helical membrane-spanning segment.

It localises to the vacuole membrane. In Schizosaccharomyces pombe (strain 972 / ATCC 24843) (Fission yeast), this protein is Ankyrin and IPT/TIG repeat-containing protein C26H5.05.